The sequence spans 538 residues: Chaperonin GroEL (538 aa).

ATP contacts are provided by residues T29 to P32, D86 to T90, G413, D479 to L481, and D495.

The protein belongs to the chaperonin (HSP60) family. Forms a cylinder of 14 subunits composed of two heptameric rings stacked back-to-back. Interacts with the co-chaperonin GroES.

It localises to the cytoplasm. The catalysed reaction is ATP + H2O + a folded polypeptide = ADP + phosphate + an unfolded polypeptide.. Together with its co-chaperonin GroES, plays an essential role in assisting protein folding. The GroEL-GroES system forms a nano-cage that allows encapsulation of the non-native substrate proteins and provides a physical environment optimized to promote and accelerate protein folding. The chain is Chaperonin GroEL from Fervidobacterium nodosum (strain ATCC 35602 / DSM 5306 / Rt17-B1).